Here is a 427-residue protein sequence, read N- to C-terminus: Ribosomal protein uS12 methylthiotransferase RimO (427 aa).

The 116-residue stretch at 1–116 (MNFYVEVLGC…IATHIGKRNV (116 aa)) folds into the MTTase N-terminal domain. Residues Cys10, Cys46, Cys79, Cys145, Cys149, and Cys152 each contribute to the [4Fe-4S] cluster site. In terms of domain architecture, Radical SAM core spans 131-360 (VDNGQYAYVK…MDIQSQISFE (230 aa)). The region spanning 363-426 (EKLVGKKLKV…IYDLEGEIVE (64 aa)) is the TRAM domain.

Belongs to the methylthiotransferase family. RimO subfamily. Requires [4Fe-4S] cluster as cofactor.

It is found in the cytoplasm. It carries out the reaction L-aspartate(89)-[ribosomal protein uS12]-hydrogen + (sulfur carrier)-SH + AH2 + 2 S-adenosyl-L-methionine = 3-methylsulfanyl-L-aspartate(89)-[ribosomal protein uS12]-hydrogen + (sulfur carrier)-H + 5'-deoxyadenosine + L-methionine + A + S-adenosyl-L-homocysteine + 2 H(+). Its function is as follows. Catalyzes the methylthiolation of an aspartic acid residue of ribosomal protein uS12. The chain is Ribosomal protein uS12 methylthiotransferase RimO from Thermosipho melanesiensis (strain DSM 12029 / CIP 104789 / BI429).